The chain runs to 146 residues: Large ribosomal subunit protein uL15 (146 aa).

Residues 1–56 form a disordered region; it reads MKLHELRAAEGANKASKRVGRGTGSGLGKTSGKGQNGQNSRSGGGVRPGFEGGQMP. 2 stretches are compositionally biased toward gly residues: residues 21–35 and 42–52; these read RGTG…GKGQ and SGGGVRPGFEG.

The protein belongs to the universal ribosomal protein uL15 family. Part of the 50S ribosomal subunit.

In terms of biological role, binds to the 23S rRNA. This is Large ribosomal subunit protein uL15 from Clostridium botulinum (strain Loch Maree / Type A3).